Consider the following 420-residue polypeptide: Gamma-glutamyl phosphate reductase (420 aa).

The protein belongs to the gamma-glutamyl phosphate reductase family.

The protein localises to the cytoplasm. The enzyme catalyses L-glutamate 5-semialdehyde + phosphate + NADP(+) = L-glutamyl 5-phosphate + NADPH + H(+). Its pathway is amino-acid biosynthesis; L-proline biosynthesis; L-glutamate 5-semialdehyde from L-glutamate: step 2/2. Its function is as follows. Catalyzes the NADPH-dependent reduction of L-glutamate 5-phosphate into L-glutamate 5-semialdehyde and phosphate. The product spontaneously undergoes cyclization to form 1-pyrroline-5-carboxylate. The chain is Gamma-glutamyl phosphate reductase from Neisseria meningitidis serogroup C / serotype 2a (strain ATCC 700532 / DSM 15464 / FAM18).